The primary structure comprises 476 residues: Bifunctional protein HldE (476 aa).

The segment at 1–318 (MKVTLPDFRR…ENAIRGRAET (318 aa)) is ribokinase. 195 to 198 (NLSE) serves as a coordination point for ATP. D264 is a catalytic residue. Residues 344–476 (MTNGIFDILH…IIQSIKNGRG (133 aa)) form a cytidylyltransferase region.

The protein in the N-terminal section; belongs to the carbohydrate kinase PfkB family. This sequence in the C-terminal section; belongs to the cytidylyltransferase family. As to quaternary structure, homodimer.

The enzyme catalyses D-glycero-beta-D-manno-heptose 7-phosphate + ATP = D-glycero-beta-D-manno-heptose 1,7-bisphosphate + ADP + H(+). It catalyses the reaction D-glycero-beta-D-manno-heptose 1-phosphate + ATP + H(+) = ADP-D-glycero-beta-D-manno-heptose + diphosphate. It functions in the pathway nucleotide-sugar biosynthesis; ADP-L-glycero-beta-D-manno-heptose biosynthesis; ADP-L-glycero-beta-D-manno-heptose from D-glycero-beta-D-manno-heptose 7-phosphate: step 1/4. Its pathway is nucleotide-sugar biosynthesis; ADP-L-glycero-beta-D-manno-heptose biosynthesis; ADP-L-glycero-beta-D-manno-heptose from D-glycero-beta-D-manno-heptose 7-phosphate: step 3/4. Functionally, catalyzes the phosphorylation of D-glycero-D-manno-heptose 7-phosphate at the C-1 position to selectively form D-glycero-beta-D-manno-heptose-1,7-bisphosphate. Catalyzes the ADP transfer from ATP to D-glycero-beta-D-manno-heptose 1-phosphate, yielding ADP-D-glycero-beta-D-manno-heptose. The protein is Bifunctional protein HldE of Yersinia pestis bv. Antiqua (strain Antiqua).